We begin with the raw amino-acid sequence, 575 residues long: Transcription factor COE2 (575 aa).

The segment at 62 to 65 (RKSN) is interaction with DNA. The C5-type zinc-finger motif lies at 150–169 (CRVLLTHEVMCSRCCEKKSC). Interaction with DNA stretches follow at residues 196–203 (NCLKTAGN) and 235–238 (NNSK). The region spanning 253-336 (PCIKAISPSE…KGAPGRFIYT (84 aa)) is the IPT/TIG domain. Residues 441–453 (STQGNNQGYIRNT) show a composition bias toward polar residues. The segment at 441-479 (STQGNNQGYIRNTSSISPRGYSSSSTPQQSNYSTSSNSM) is disordered. The segment covering 454–479 (SSISPRGYSSSSTPQQSNYSTSSNSM) has biased composition (low complexity).

Belongs to the COE family. Forms either a homodimer or a heterodimer with a related family member. Interacts with SIX1. In terms of tissue distribution, in adult expressed in olfactory epithelium and at a much lower level in Purkinje cells of the cerebellum. In embryo expressed in epithalamus, in cells near the ventricular zone of mesencephalon and on the ventral surface of rhombencephalon, in the developing vomeronasal organ, at a lower level in developing spinal cord. Not expressed in developing retina, inner ear, dorsal root ganglia, trigeminal ganglia and glossopharyngeal ganglia.

The protein resides in the nucleus. In terms of biological role, transcription factor that, in osteoblasts, activates the decoy receptor for RANKL, TNFRSF11B, which in turn regulates osteoclast differentiation. Acts in synergy with the Wnt-responsive LEF1/CTNNB1 pathway. Recognizes variations of the palindromic sequence 5'-ATTCCCNNGGGAATT-3'. This Mus musculus (Mouse) protein is Transcription factor COE2 (Ebf2).